The chain runs to 420 residues: Reticulon-4 receptor-like 2 (420 aa).

Positions 1–46 (MLPGLRRLLQAPASACLLLMLLALPLAAPSCPMLCTCYSSPPTVSC) are cleaved as a signal peptide. 2 disulfide bridges follow: C31/C37 and C35/C46. The region spanning 47–60 (QANNFSSVPLSLPP) is the LRRNT domain. N50 carries N-linked (GlcNAc...) asparagine glycosylation. 8 LRR repeats span residues 61-82 (STQR…TFGS), 83-104 (NLLT…TFRH), 107-129 (ALEE…TFQG), 132-153 (RLQS…IFRG), 156-177 (SLQY…LFAD), 180-201 (NLSH…VFRG), 204-225 (SLDR…AFRG), and 228-249 (RLTI…ALAD). N93 carries N-linked (GlcNAc...) asparagine glycosylation. A glycan (N-linked (GlcNAc...) asparagine) is linked at N236. Positions 261 to 312 (NPWACDCRARPLWAWFQRARVSSSDVTCATPPERQGRDLRALREADFQACPP) constitute an LRRCT domain. 2 cysteine pairs are disulfide-bonded: C265–C288 and C267–C310. The disordered stretch occupies residues 308-399 (QACPPAAPTR…CQAPPDSRGP (92 aa)). The segment at 315–327 (PTRPGSRARGNSS) is important for interaction with MAG. Residues 351–360 (LPAEDSRGRQ) are compositionally biased toward basic and acidic residues. C390 is lipidated: GPI-anchor amidated cysteine. The propeptide at 391-420 (QAPPDSRGPALSAGLPSPLLCLLLLVPHHL) is removed in mature form.

This sequence belongs to the Nogo receptor family. Interaction with MAG is controversial, and may be indirect. Does not interact with MAG, OMG and RTN4. Interacts with MAG. Undergoes zinc metalloproteinase-mediated ectodomain shedding in neuroblastoma cells; is released both as a full-length ectodomain and an N-terminal fragment containing the leucine-rich repeat (LRR) region of the protein. Post-translationally, N-glycosylated. As to expression, highly expressed in brain and liver. Expressed at lower levels in kidney, mammary gland, placenta, skeletal muscle, spleen and thyroid.

Its subcellular location is the cell membrane. It is found in the membrane raft. The protein localises to the cell projection. It localises to the dendrite. The protein resides in the perikaryon. Its subcellular location is the axon. In terms of biological role, cell surface receptor that plays a functionally redundant role in the inhibition of neurite outgrowth mediated by MAG. Plays a functionally redundant role in postnatal brain development. Contributes to normal axon migration across the brain midline and normal formation of the corpus callosum. Does not seem to play a significant role in regulating axon regeneration in the adult central nervous system. Protects motoneurons against apoptosis; protection against apoptosis is probably mediated by MAG. Like other family members, plays a role in restricting the number dendritic spines and the number of synapses that are formed during brain development. Signaling mediates activation of Rho and downstream reorganization of the actin cytoskeleton. The protein is Reticulon-4 receptor-like 2 of Homo sapiens (Human).